Here is a 288-residue protein sequence, read N- to C-terminus: Elongation factor Ts (288 aa).

Positions 79-82 (TDFV) are involved in Mg(2+) ion dislocation from EF-Tu.

The protein belongs to the EF-Ts family.

The protein localises to the cytoplasm. In terms of biological role, associates with the EF-Tu.GDP complex and induces the exchange of GDP to GTP. It remains bound to the aminoacyl-tRNA.EF-Tu.GTP complex up to the GTP hydrolysis stage on the ribosome. The sequence is that of Elongation factor Ts from Ehrlichia ruminantium (strain Gardel).